Here is a 444-residue protein sequence, read N- to C-terminus: Phosphoglucosamine mutase (444 aa).

Residue S102 is the Phosphoserine intermediate of the active site. 4 residues coordinate Mg(2+): S102, D241, D243, and D245. S102 is subject to Phosphoserine.

Belongs to the phosphohexose mutase family. The cofactor is Mg(2+). In terms of processing, activated by phosphorylation.

The catalysed reaction is alpha-D-glucosamine 1-phosphate = D-glucosamine 6-phosphate. In terms of biological role, catalyzes the conversion of glucosamine-6-phosphate to glucosamine-1-phosphate. In Pasteurella multocida (strain Pm70), this protein is Phosphoglucosamine mutase.